Reading from the N-terminus, the 418-residue chain is Gamma-glutamyl phosphate reductase (418 aa).

This sequence belongs to the gamma-glutamyl phosphate reductase family.

The protein resides in the cytoplasm. It carries out the reaction L-glutamate 5-semialdehyde + phosphate + NADP(+) = L-glutamyl 5-phosphate + NADPH + H(+). It participates in amino-acid biosynthesis; L-proline biosynthesis; L-glutamate 5-semialdehyde from L-glutamate: step 2/2. Functionally, catalyzes the NADPH-dependent reduction of L-glutamate 5-phosphate into L-glutamate 5-semialdehyde and phosphate. The product spontaneously undergoes cyclization to form 1-pyrroline-5-carboxylate. The protein is Gamma-glutamyl phosphate reductase of Nitrosococcus oceani (strain ATCC 19707 / BCRC 17464 / JCM 30415 / NCIMB 11848 / C-107).